Reading from the N-terminus, the 148-residue chain is Pseudoazurin (148 aa).

Residues 1-25 (MMIFRALIAAATLAIAIATTLPAAA) form the signal peptide. The 89-residue stretch at 30–118 (VKMLNSGPGG…MGMVALVVVG (89 aa)) folds into the Plastocyanin-like domain. Cu cation is bound by residues H65, C103, H106, and M111.

It depends on Cu cation as a cofactor.

The protein localises to the periplasm. The polypeptide is Pseudoazurin (Methylorubrum extorquens (strain ATCC 14718 / DSM 1338 / JCM 2805 / NCIMB 9133 / AM1) (Methylobacterium extorquens)).